Here is a 342-residue protein sequence, read N- to C-terminus: MPKRKVTFQGVGDEDGEDEISVPKKKLVDPVAAAGGPGSRFKGKHSLDSDEEDDDEEGSSKYDILASEDVEGQEAATLPSEGGVRITPFNLQEEMEEGHFDADGNYFLNQDAQIRDSWLDNIDWVRIKERPPDKHQVSDSEEEDSLGQTPMSAQALLEGLLELLLPRETVAGALRRLGARGGGKGSNSKGTGRPNSPQRLDRLSGLADQMVARGNLGVYQETRERLAMRLKGLGCRAQGSHDPTPPPSLDMFAEEVAEGELETPTPTQREEAESAGDGLMDVMWEYKWENTGDAELYGPFTSAQMQTWVSEGYFPDGVYCRKLDPPGGQFYNSKRIDFELYT.

The segment at 1 to 64 is disordered; that stretch reads MPKRKVTFQG…DEEGSSKYDI (64 aa). A Glycyl lysine isopeptide (Lys-Gly) (interchain with G-Cter in SUMO2) cross-link involves residue Lys26. Lys44 bears the N6-acetyllysine mark. A phosphoserine mark is found at Ser46, Ser49, and Ser117. Disordered regions lie at residues 130–150 and 177–200; these read RPPDKHQVSDSEEEDSLGQTP and LGARGGGKGSNSKGTGRPNSPQRL. Position 196 is a phosphoserine (Ser196). A GYF domain is found at 281–339; it reads DVMWEYKWENTGDAELYGPFTSAQMQTWVSEGYFPDGVYCRKLDPPGGQFYNSKRIDFE.

As to quaternary structure, component of the U5 snRNP complex composed of the U5 snRNA and at least PRPF6, PRPF8, SNRNP200, EFTUD2, SNRNP40, DDX23, TXNL4A and CD2BP2. Interacts directly with TXNL4A and PRPF6. Interacts (via GYF domain) with CD2 (via Pro-rich sequence in the cytoplasmic domain). Interacts with PQBP1.

It is found in the cytoplasm. Its subcellular location is the nucleus. In terms of biological role, involved in pre-mRNA splicing as component of the U5 snRNP complex that is involved in spliceosome assembly. The polypeptide is CD2 antigen cytoplasmic tail-binding protein 2 (Cd2bp2) (Mus musculus (Mouse)).